The primary structure comprises 203 residues: Small ribosomal subunit protein uS4 (203 aa).

The region spanning 93–156 (TRLDNLVFRL…QNLAIVNEAI (64 aa)) is the S4 RNA-binding domain.

This sequence belongs to the universal ribosomal protein uS4 family. In terms of assembly, part of the 30S ribosomal subunit. Contacts protein S5. The interaction surface between S4 and S5 is involved in control of translational fidelity.

Its function is as follows. One of the primary rRNA binding proteins, it binds directly to 16S rRNA where it nucleates assembly of the body of the 30S subunit. Functionally, with S5 and S12 plays an important role in translational accuracy. In Lacticaseibacillus casei (strain BL23) (Lactobacillus casei), this protein is Small ribosomal subunit protein uS4.